Consider the following 180-residue polypeptide: ATP synthase subunit b 2 (180 aa).

A helical membrane pass occupies residues 33–53 (IFWLLVTLVAIYFLLTRVALP).

The protein belongs to the ATPase B chain family. As to quaternary structure, F-type ATPases have 2 components, F(1) - the catalytic core - and F(0) - the membrane proton channel. F(1) has five subunits: alpha(3), beta(3), gamma(1), delta(1), epsilon(1). F(0) has three main subunits: a(1), b(2) and c(10-14). The alpha and beta chains form an alternating ring which encloses part of the gamma chain. F(1) is attached to F(0) by a central stalk formed by the gamma and epsilon chains, while a peripheral stalk is formed by the delta and b chains.

Its subcellular location is the cell inner membrane. Functionally, f(1)F(0) ATP synthase produces ATP from ADP in the presence of a proton or sodium gradient. F-type ATPases consist of two structural domains, F(1) containing the extramembraneous catalytic core and F(0) containing the membrane proton channel, linked together by a central stalk and a peripheral stalk. During catalysis, ATP synthesis in the catalytic domain of F(1) is coupled via a rotary mechanism of the central stalk subunits to proton translocation. Component of the F(0) channel, it forms part of the peripheral stalk, linking F(1) to F(0). The b'-subunit is a diverged and duplicated form of b found in plants and photosynthetic bacteria. This chain is ATP synthase subunit b 2 (atpF2), found in Cereibacter sphaeroides (strain ATCC 17025 / ATH 2.4.3) (Rhodobacter sphaeroides).